A 953-amino-acid chain; its full sequence is Anion exchange protein 4 (953 aa).

Residues 20 to 41 form a disordered region; the sequence is SEQLDGDLGPGSGLDGPSDIDN. Transmembrane regions (helical) follow at residues 385–405, 413–433, 470–490, and 501–521; these read AVLY…GLLG, GVLE…LMAG, VGIW…SLLV, and FCAL…LNLI. The membrane (anion exchange) stretch occupies residues 385-953; sequence AVLYIYLATV…KAPEINISVN (569 aa). Residues Asn546 and Asn570 are each glycosylated (N-linked (GlcNAc...) asparagine). 7 consecutive transmembrane segments (helical) span residues 594 to 614, 635 to 655, 682 to 702, 728 to 748, 785 to 805, 807 to 827, and 869 to 889; these read VPDI…CAIA, FSSV…GLAT, PWWL…LIFM, LFCV…WYVS, GLVV…LKFI, MPVL…SMQF, and LWVI…LGLV. The segment covering 916–927 has biased composition (basic and acidic residues); that stretch reads KTIPENRPEPEH. The interval 916-938 is disordered; the sequence is KTIPENRPEPEHLFSGNDSENSE. N-linked (GlcNAc...) asparagine glycosylation is found at Asn932 and Asn949.

The protein belongs to the anion exchanger (TC 2.A.31) family. In terms of tissue distribution, expressed in kidney and gastrointestinal tract. In kidney, it is highly expressed in the cortex, expressed at intermediate level in the outer medulla and not expressed in the inner medulla. It is expressed in the cecum, while it is absent in other segments of gastrointestinal tract. Highly expressed in the cortical collecting duct (CCD). Expressed in both alpha-intercalated cells and beta-intercalated cells in the CCD (at protein level).

Its subcellular location is the basolateral cell membrane. It carries out the reaction 2 hydrogencarbonate(out) + chloride(in) + Na(+)(out) = 2 hydrogencarbonate(in) + chloride(out) + Na(+)(in). It catalyses the reaction K(+)(in) + 2 hydrogencarbonate(in) + chloride(out) = K(+)(out) + 2 hydrogencarbonate(out) + chloride(in). The catalysed reaction is Li(+)(in) + 2 hydrogencarbonate(in) + chloride(out) = Li(+)(out) + 2 hydrogencarbonate(out) + chloride(in). The enzyme catalyses Rb(+)(in) + 2 hydrogencarbonate(in) + chloride(out) = Rb(+)(out) + 2 hydrogencarbonate(out) + chloride(in). It carries out the reaction Cs(+)(in) + 2 hydrogencarbonate(in) + chloride(out) = Cs(+)(out) + 2 hydrogencarbonate(out) + chloride(in). 4,4'-diisothiocyanatodihydrostilbene-2,2'- disulfonic acid (H2DIDS) potently inhibits chloride/hydrogencarbonate antiporter activity with 50% inhibition at about 5 uM. Completely inhibits chloride/hydrogencarbonate antiporter activity at 200 uM of 4,4'-diisothiocyano-trans-stilbene-2,2'-disulfonic acid (DIDS). Its function is as follows. Electroneutral Cl(-)/HCO3(-) antiporter that favors chloride ion entry and efflux of hydrogencarbonate and sodium ion across the basolateral membrane and may participate in salivary secretion. Also mediates Cl(-)/HCO3(-) exchange activity in the presence of K(+) as well as Cs(+), Li(+), and Rb(+). Does not contribute to Cl(-)/HCO3(-) exchanger in the apical membrane of the upper villous epithelium. The sequence is that of Anion exchange protein 4 from Rattus norvegicus (Rat).